The following is a 373-amino-acid chain: tRNA-specific 2-thiouridylase MnmA (373 aa).

ATP-binding positions include Gly12 to Ser19 and Met38. Residues Asn98 to Asp100 form an interaction with target base in tRNA region. Cys103 acts as the Nucleophile in catalysis. The cysteines at positions 103 and 200 are disulfide-linked. Gly127 provides a ligand contact to ATP. Positions Lys150 to Gln152 are interaction with tRNA. Cys200 acts as the Cysteine persulfide intermediate in catalysis. Residues Arg312–Tyr313 form an interaction with tRNA region.

Belongs to the MnmA/TRMU family.

It is found in the cytoplasm. The catalysed reaction is S-sulfanyl-L-cysteinyl-[protein] + uridine(34) in tRNA + AH2 + ATP = 2-thiouridine(34) in tRNA + L-cysteinyl-[protein] + A + AMP + diphosphate + H(+). In terms of biological role, catalyzes the 2-thiolation of uridine at the wobble position (U34) of tRNA, leading to the formation of s(2)U34. The protein is tRNA-specific 2-thiouridylase MnmA of Streptococcus pyogenes serotype M6 (strain ATCC BAA-946 / MGAS10394).